The sequence spans 276 residues: 2-dehydro-3-deoxyphosphooctonate aldolase (276 aa).

Belongs to the KdsA family.

Its subcellular location is the cytoplasm. It catalyses the reaction D-arabinose 5-phosphate + phosphoenolpyruvate + H2O = 3-deoxy-alpha-D-manno-2-octulosonate-8-phosphate + phosphate. Its pathway is carbohydrate biosynthesis; 3-deoxy-D-manno-octulosonate biosynthesis; 3-deoxy-D-manno-octulosonate from D-ribulose 5-phosphate: step 2/3. It functions in the pathway bacterial outer membrane biogenesis; lipopolysaccharide biosynthesis. The chain is 2-dehydro-3-deoxyphosphooctonate aldolase from Xylella fastidiosa (strain 9a5c).